The sequence spans 485 residues: Glutamyl-tRNA(Gln) amidotransferase subunit A (485 aa).

Active-site charge relay system residues include K78 and S153. S177 (acyl-ester intermediate) is an active-site residue.

It belongs to the amidase family. GatA subfamily. As to quaternary structure, heterotrimer of A, B and C subunits.

It catalyses the reaction L-glutamyl-tRNA(Gln) + L-glutamine + ATP + H2O = L-glutaminyl-tRNA(Gln) + L-glutamate + ADP + phosphate + H(+). Its function is as follows. Allows the formation of correctly charged Gln-tRNA(Gln) through the transamidation of misacylated Glu-tRNA(Gln) in organisms which lack glutaminyl-tRNA synthetase. The reaction takes place in the presence of glutamine and ATP through an activated gamma-phospho-Glu-tRNA(Gln). The protein is Glutamyl-tRNA(Gln) amidotransferase subunit A of Bacillus mycoides (strain KBAB4) (Bacillus weihenstephanensis).